Reading from the N-terminus, the 130-residue chain is Small ribosomal subunit protein uS11c (130 aa).

This sequence belongs to the universal ribosomal protein uS11 family. In terms of assembly, part of the 30S ribosomal subunit.

It localises to the plastid. It is found in the chloroplast. The sequence is that of Small ribosomal subunit protein uS11c from Spirogyra maxima (Green alga).